A 387-amino-acid chain; its full sequence is Lipid-A-disaccharide synthase (387 aa).

This sequence belongs to the LpxB family.

The catalysed reaction is a lipid X + a UDP-2-N,3-O-bis[(3R)-3-hydroxyacyl]-alpha-D-glucosamine = a lipid A disaccharide + UDP + H(+). The protein operates within bacterial outer membrane biogenesis; LPS lipid A biosynthesis. Its function is as follows. Condensation of UDP-2,3-diacylglucosamine and 2,3-diacylglucosamine-1-phosphate to form lipid A disaccharide, a precursor of lipid A, a phosphorylated glycolipid that anchors the lipopolysaccharide to the outer membrane of the cell. In Glaesserella parasuis serovar 5 (strain SH0165) (Haemophilus parasuis), this protein is Lipid-A-disaccharide synthase.